A 600-amino-acid chain; its full sequence is Ligand-dependent nuclear receptor corepressor-like protein (600 aa).

3 disordered regions span residues 1 to 24 (MEKGTDRMAAAAPAPPAAASQCRS), 102 to 122 (SVIGSSQSTPTEELSSQGQSN), and 495 to 519 (DGTSENTEDSLDRKDNKQPRKKRGR). A compositionally biased stretch (polar residues) spans 104-122 (IGSSQSTPTEELSSQGQSN). Residues 514–566 (RKKRGRYRQYDHEIMEEAIAMVMSGKMSVSKAQGIYGVPHSTLEYKVKERSGT) form the HTH psq-type domain. Residues 542–562 (VSKAQGIYGVPHSTLEYKVKE) constitute a DNA-binding region (H-T-H motif). A disordered region spans residues 581-600 (GLFNMTDSGTGSCKTSSKPV). Polar residues predominate over residues 583 to 600 (FNMTDSGTGSCKTSSKPV).

It localises to the nucleus. Functionally, may act as transcription activator that binds DNA elements with the sequence 5'-CCCTATCGATCGATCTCTACCT-3'. The protein is Ligand-dependent nuclear receptor corepressor-like protein (LCORL) of Gallus gallus (Chicken).